Reading from the N-terminus, the 463-residue chain is Chaperone SurA (463 aa).

The signal sequence occupies residues 1-25 (MTRYFSIVLSLLLAVSCVFLPVASA). PpiC domains follow at residues 175–277 (GAQY…KLVE) and 291–390 (ATEY…QRLG). The segment at 439–463 (ADDHHTPSAAVTPATGAVLPAATKH) is disordered.

The protein localises to the periplasm. It carries out the reaction [protein]-peptidylproline (omega=180) = [protein]-peptidylproline (omega=0). Functionally, chaperone involved in the correct folding and assembly of outer membrane proteins. Recognizes specific patterns of aromatic residues and the orientation of their side chains, which are found more frequently in integral outer membrane proteins. May act in both early periplasmic and late outer membrane-associated steps of protein maturation. In Xylella fastidiosa (strain Temecula1 / ATCC 700964), this protein is Chaperone SurA.